The sequence spans 278 residues: uncharacterized protein (278 aa).

Belongs to the short-chain dehydrogenases/reductases (SDR) family.

This is an uncharacterized protein from Bacillus subtilis (strain 168).